The sequence spans 229 residues: MSVLVITGTDTGVGKTVATAALACAARVAGIDVAVCKPVQTGTGPAGGTGDDDLVEIGRLAGVDALHPGWRYPDPLAPVAAAERAGAALPTRDELIGMIRAADAPGRLTLVEGAGGLLVELGQDAVTLRDVATELAAPVLVVVAPGLGTLNHTALTLESLAAQQVPCAGLVIGAWPAQPGAAEIDNRDALARLAPVRAALPAGVGSVSPVDFERISATAFDPNWLAGLL.

Residue 12–17 (GVGKTV) coordinates ATP. Mg(2+) is bound at residue threonine 16. Lysine 37 is a catalytic residue. Residue threonine 41 coordinates substrate. Residues aspartate 53, 112–115 (EGAG), and 201–203 (PAG) each bind ATP. The Mg(2+) site is built by aspartate 53 and glutamate 112.

Belongs to the dethiobiotin synthetase family. As to quaternary structure, homodimer. The cofactor is Mg(2+).

It localises to the cytoplasm. The catalysed reaction is (7R,8S)-7,8-diammoniononanoate + CO2 + ATP = (4R,5S)-dethiobiotin + ADP + phosphate + 3 H(+). It participates in cofactor biosynthesis; biotin biosynthesis; biotin from 7,8-diaminononanoate: step 1/2. Its function is as follows. Catalyzes a mechanistically unusual reaction, the ATP-dependent insertion of CO2 between the N7 and N8 nitrogen atoms of 7,8-diaminopelargonic acid (DAPA, also called 7,8-diammoniononanoate) to form a ureido ring. This is ATP-dependent dethiobiotin synthetase BioD from Mycobacterium sp. (strain JLS).